A 452-amino-acid chain; its full sequence is MGKVSLKDELAGMLNPQPQERDPEALEDAFSDREDSSEEENDTLGREHYVDVSESKLRSKQAPQLDPKFKGRKTSRQELLNSGSLNSQSSSPSEEEDSEEDENDAVSEDHENFSSSEASSISEENEDDDQSSAIPEKDMDRLKKIINGEKKLSDQIRTSALEDMKKGLALKEQMRFYDNVLDTRIRLQKGCSQLLSSSNQLQGDKVEARDGLVSFIQHTLQLRKNLLIDSGVEILDSRSKRKENPVSLEEIALEMNNLDDSLNEWKNDTLTKWHNRVQAVQGISQSNKFKALNQSIVQQIENSMINKKDLVERTRIDYSDPNNKTFNPEIYNDTDFYQSLLKDFINSRMADSTRDGTVRWMATKKQKQKKENVDTKASKGRKIRYHVHDKLQNFMAPIEVTVWPDEQTEDLFSSLLGQQLDLSETANDTNTSNFVEKDDELISSNDGFSLFG.

Basic and acidic residues-rich tracts occupy residues 1-10 and 19-34; these read MGKVSLKDEL and QERDPEALEDAFSDRE. Positions 1–141 are disordered; the sequence is MGKVSLKDEL…SAIPEKDMDR (141 aa). Residues Ser-31, Ser-36, and Ser-37 each carry the phosphoserine modification. Positions 43 to 57 are enriched in basic and acidic residues; sequence TLGREHYVDVSESKL. Low complexity predominate over residues 78–92; the sequence is ELLNSGSLNSQSSSP. Over residues 93 to 106 the composition is skewed to acidic residues; sequence SEEEDSEEDENDAV.

It belongs to the AATF family.

It is found in the nucleus. The protein resides in the nucleolus. The chain is Protein bfr2 (bfr2) from Schizosaccharomyces pombe (strain 972 / ATCC 24843) (Fission yeast).